The following is a 143-amino-acid chain: Hemoglobin subunit alpha-2 (143 aa).

Ser2 carries the N-acetylserine modification. The region spanning 2–143 (SLSSKQKATV…LALALAEKYR (142 aa)) is the Globin domain. His60 provides a ligand contact to O2. His89 is a heme b binding site.

Belongs to the globin family. Hb 2 is a heterotetramer of two alpha-2 and two beta-2 chains. In terms of tissue distribution, red blood cells.

Involved in oxygen transport from gills to the various peripheral tissues. This chain is Hemoglobin subunit alpha-2 (hba2), found in Gadus morhua (Atlantic cod).